Reading from the N-terminus, the 414-residue chain is Poly(3-hydroxyalkanoate) depolymerase C (414 aa).

The signal sequence occupies residues 1–37; the sequence is MLAKQIKKANSRSTLLRKSLLFAAPIILAVSSSSVYA. Ser-154 (charge relay system) is an active-site residue.

The protein belongs to the AB hydrolase superfamily. Lipase family.

It localises to the secreted. Specific for poly(hydroxyalkanoic acid) consisting of monomers of four or five carbon atoms and for P-nitrophenylbutyrate as substrates. The sequence is that of Poly(3-hydroxyalkanoate) depolymerase C (phaZ1) from Paucimonas lemoignei (Pseudomonas lemoignei).